The primary structure comprises 273 residues: HTH-type transcriptional activator RhaS (273 aa).

Positions 174–272 constitute an HTH araC/xylS-type domain; the sequence is YQLLDWLQNN…SQSPRDLRSQ (99 aa). 2 consecutive DNA-binding regions (H-T-H motif) follow at residues 191–212 and 239–262; these read PELA…KNKT and VTDI…KREF.

Binds DNA as a dimer.

Its subcellular location is the cytoplasm. Activates expression of the rhaBAD and rhaT operons. This Yersinia pseudotuberculosis serotype O:1b (strain IP 31758) protein is HTH-type transcriptional activator RhaS.